The primary structure comprises 1633 residues: Serine-aspartate repeat-containing protein F (1633 aa).

An N-terminal signal peptide occupies residues 1-45 (MKKRRQGPINKRVDFLSNKVNKYSIRKFTVGTASILVGATLMFGA). A ligand binding A region region spans residues 46–678 (ADNEAKAAED…GSSTAQGDNP (633 aa)). Residues 51 to 269 (KAAEDNQLES…SISTDSSVND (219 aa)) form a disordered region. Over residues 61 to 74 (ASKEEQKGSRDNES) the composition is skewed to basic and acidic residues. 2 stretches are compositionally biased toward polar residues: residues 85 to 99 (GSHSSEKTTNVNNAT) and 146 to 168 (PKTSTTQQDSTEKNNPSLKDNLN). A compositionally biased stretch (basic and acidic residues) spans 175-184 (KESKTDEHST). Polar residues predominate over residues 186–226 (QAQMSTNKSNLDTNDSPTQSEKTSSQANNDSTDNQSAPSKQ). Over residues 227–253 (LDSKPSEQKVYKTKFNDEPTQDVEHTT) the composition is skewed to basic and acidic residues. The span at 255-266 (KLKTPSISTDSS) shows a compositional bias: polar residues. CNA-B domains are found at residues 679–797 (TYSL…YLTP), 798–907 (KYNV…FYKP), 908–1018 (IYNL…YKTP), and 1019–1129 (KYSV…FDDD). The tract at residues 679-1129 (TYSLGDYVWL…SIDNGYFDDD (451 aa)) is type I collagen binding region. A disordered region spans residues 862–889 (FETPEGYTPTKQNSGSDEGKDSNGTKTT). A disordered region spans residues 1085-1608 (KPEGMTQTTA…ANEDHDSKGT (524 aa)). A compositionally biased stretch (basic and acidic residues) spans 1107 to 1119 (EDVRVTITDHDDF). Acidic residues predominate over residues 1125–1584 (YFDDDSDSDS…DSDSDSDSDS (460 aa)). Over residues 1585 to 1606 (DSDKNAKDKLPDTGANEDHDSK) the composition is skewed to basic and acidic residues. The short motif at 1594-1598 (LPDTG) is the LPXTG sorting signal element. Residue Thr-1597 is modified to Pentaglycyl murein peptidoglycan amidated threonine. Residues 1598 to 1633 (GANEDHDSKGTLLGTLFAGLGALLLGRRRKKDNKEK) constitute a propeptide, removed by sortase.

This sequence belongs to the serine-aspartate repeat-containing protein (SDr) family.

Its subcellular location is the secreted. It localises to the cell wall. Functionally, binds to type I collagen via alpha-2(I) or alpha-1(I) chains. The sequence is that of Serine-aspartate repeat-containing protein F (sdrF) from Staphylococcus epidermidis (strain ATCC 12228 / FDA PCI 1200).